The chain runs to 597 residues: Putative lipase ATG15 (597 aa).

Residues 1–15 (MTLEKNRHANKGTSW) lie on the Cytoplasmic side of the membrane. A helical; Signal-anchor for type II membrane protein transmembrane segment spans residues 16–36 (TWMIYKFVVGVITVAILVLFI). Residues 37-597 (TQKSVSQAQD…DDDEDTFERK (561 aa)) are Lumenal-facing. 3 N-linked (GlcNAc...) asparagine glycosylation sites follow: Asn-195, Asn-262, and Asn-346. The active-site Charge relay system is Ser-364. N-linked (GlcNAc...) asparagine glycosylation is present at Asn-481. The segment at 507 to 570 (EKDEPKLPNP…PTDQDPPKKC (64 aa)) is disordered. Low complexity predominate over residues 519–554 (SSSKSTLSTKTTSLKSSSTYSGSTSSSTVTKTTQTS).

This sequence belongs to the AB hydrolase superfamily. Lipase family. Binds to both phosphatidylinositol (PI) and phosphatidylinositol 3,5-bisphosphate (PIP2).

It is found in the endosome. The protein localises to the multivesicular body membrane. It localises to the prevacuolar compartment membrane. It carries out the reaction a triacylglycerol + H2O = a diacylglycerol + a fatty acid + H(+). Its function is as follows. Lipase which is essential for lysis of subvacuolar cytoplasm to vacuole targeted bodies and intravacuolar autophagic bodies. Involved in the lysis of intravacuolar multivesicular body (MVB) vesicles. The intravacuolar membrane disintegration by ATG15 is critical to life span extension. The polypeptide is Putative lipase ATG15 (ATG15) (Candida albicans (strain SC5314 / ATCC MYA-2876) (Yeast)).